Consider the following 262-residue polypeptide: Glycoprotein gp2 (262 aa).

The interval R1–Q45 is disordered.

It is found in the virion membrane. Its function is as follows. Virulence factor. This is Glycoprotein gp2 from Equus caballus (Horse).